Consider the following 24-residue polypeptide: SM-11044-binding protein (24 aa).

Its function is as follows. May mediate relaxation of depolarized colon tonus. It binds iodocyanopindolol and SM-11044. This Rattus norvegicus (Rat) protein is SM-11044-binding protein.